We begin with the raw amino-acid sequence, 180 residues long: ATP synthase subunit b, chloroplastic (180 aa).

Residues 28 to 48 (VTTLINIGVVLCLLIIFGKGF) traverse the membrane as a helical segment.

Belongs to the ATPase B chain family. F-type ATPases have 2 components, F(1) - the catalytic core - and F(0) - the membrane proton channel. F(1) has five subunits: alpha(3), beta(3), gamma(1), delta(1), epsilon(1). F(0) has four main subunits: a(1), b(1), b'(1) and c(10-14). The alpha and beta chains form an alternating ring which encloses part of the gamma chain. F(1) is attached to F(0) by a central stalk formed by the gamma and epsilon chains, while a peripheral stalk is formed by the delta, b and b' chains.

The protein resides in the plastid. Its subcellular location is the chloroplast thylakoid membrane. Its function is as follows. F(1)F(0) ATP synthase produces ATP from ADP in the presence of a proton or sodium gradient. F-type ATPases consist of two structural domains, F(1) containing the extramembraneous catalytic core and F(0) containing the membrane proton channel, linked together by a central stalk and a peripheral stalk. During catalysis, ATP synthesis in the catalytic domain of F(1) is coupled via a rotary mechanism of the central stalk subunits to proton translocation. Functionally, component of the F(0) channel, it forms part of the peripheral stalk, linking F(1) to F(0). This chain is ATP synthase subunit b, chloroplastic, found in Cuscuta obtusiflora (Peruvian dodder).